A 739-amino-acid chain; its full sequence is MEGGGGRDEPSACRAGDVNMDDPKKEDILLLADEKFDFDLSLSSSSANEDDEVFFGPFGHKERCIAASLELNNPVPEQPPLPTSESPFAWSPLAGEKFVEVYKEAHLLALHIESSSRNQAAQAAKPEDPRSQGVERFIQESKLKINLFEKEKEMKKSPTSLKRETYYLSDSPLLGPPVGEPRLLASSPALPSSGAQARLTRAPGPPHSAHALPRESCTAHAASQAATQRKPGTKLLLPRAASVRGRSIPGAAEKPKKEIPASPSRTKIPAEKESHRDVLPDKPAPGAVNVPAAGSHLGQGKRAIPVPNKLGLKKTLLKAPGSTSNLARKSSSGPVWSGASSACTSPAVGKAKSSEFASIPANSSRPLSNISKSGRMGPAMLRPALPAGPVGASSWQAKRVDVSELAAEQLTAPPSASPTQPQTPEGGGQWLNSSCAWSESSQLNKTRSIRRRDSCLNSKTKVMPTPTNQFKIPKFSIGDSPDSSTPKLSRAQRPQSCTSVGRVTVHSTPVRRSSGPAPQSLLSAWRVSALPTPASRRCSGLPPMTPKTMPRAVGSPLCVPARRRSSEPRKNSAMRTEPTRESNRKTDSRLVDVSPDRGSPPSRVPQALNFSPEESDSTFSKSTATEVAREEAKPGGDAAPSEALLVDIKLEPLAVTPDAASQPLIDLPLIDFCDTPEAHVAVGSESRPLIDLMTNTPDMNKNVAKPSPVVGQLIDLSSPLIQLSPEADKENVDSPLLKF.

Basic and acidic residues predominate over residues 1–11 (MEGGGGRDEPS). A disordered region spans residues 1–20 (MEGGGGRDEPSACRAGDVNM). A Phosphoserine modification is found at Ser-91. Disordered stretches follow at residues 116–136 (SRNQ…GVER), 149–306 (EKEK…AIPV), and 320–639 (PGST…GDAA). Basic and acidic residues predominate over residues 149–165 (EKEKEMKKSPTSLKRET). Ser-157 carries the phosphoserine modification. Position 159 is a phosphothreonine (Thr-159). Ser-171, Ser-187, Ser-208, Ser-247, and Ser-262 each carry phosphoserine. Residues 181 to 195 (PRLLASSPALPSSGA) are compositionally biased toward low complexity. Positions 268 to 280 (IPAEKESHRDVLP) are enriched in basic and acidic residues. Low complexity-rich tracts occupy residues 284-294 (APGAVNVPAAG) and 330-342 (SSSG…ASSA). Residue Ser-331 is modified to Phosphoserine. Over residues 360–372 (PANSSRPLSNISK) the composition is skewed to polar residues. The span at 411–424 (TAPPSASPTQPQTP) shows a compositional bias: low complexity. Polar residues-rich tracts occupy residues 430-446 (WLNS…LNKT) and 455-470 (CLNS…TNQF). Ser-480 carries the phosphoserine modification. The span at 481–522 (PDSSTPKLSRAQRPQSCTSVGRVTVHSTPVRRSSGPAPQSLL) shows a compositional bias: polar residues. Phosphothreonine is present on Thr-485. Ser-496, Ser-499, Ser-514, Ser-520, Ser-523, and Ser-528 each carry phosphoserine. Thr-532 bears the Phosphothreonine mark. Phosphoserine occurs at positions 535 and 555. The segment covering 577–590 (EPTRESNRKTDSRL) has biased composition (basic and acidic residues). Phosphoserine is present on residues Ser-594 and Ser-611. Thr-696 is modified (phosphothreonine). Residues Ser-707, Ser-717, Ser-718, Ser-724, and Ser-734 each carry the phosphoserine modification.

Phosphorylated in mitosis.

It is found in the cytoplasm. It localises to the cytoskeleton. May be involved in p53-induced cell cycle arrest in G2/M phase by interfering with microtubule rearrangements that are required to enter mitosis. Overexpression delays G2/M phase progression. The polypeptide is G2 and S phase-expressed protein 1 (Homo sapiens (Human)).